The chain runs to 289 residues: Shikimate dehydrogenase (NADP(+)) (289 aa).

Residues 22-24 (SRS) and Thr69 contribute to the shikimate site. Lys73 functions as the Proton acceptor in the catalytic mechanism. NADP(+) is bound at residue Glu85. Positions 94 and 109 each coordinate shikimate. Residues 134–138 (GAGGA), 158–163 (NRTLSR), and Ile226 each bind NADP(+). Tyr228 is a binding site for shikimate. Residue Gly249 participates in NADP(+) binding.

This sequence belongs to the shikimate dehydrogenase family. In terms of assembly, homodimer.

It catalyses the reaction shikimate + NADP(+) = 3-dehydroshikimate + NADPH + H(+). It functions in the pathway metabolic intermediate biosynthesis; chorismate biosynthesis; chorismate from D-erythrose 4-phosphate and phosphoenolpyruvate: step 4/7. Its function is as follows. Involved in the biosynthesis of the chorismate, which leads to the biosynthesis of aromatic amino acids. Catalyzes the reversible NADPH linked reduction of 3-dehydroshikimate (DHSA) to yield shikimate (SA). This chain is Shikimate dehydrogenase (NADP(+)), found in Brucella melitensis biotype 2 (strain ATCC 23457).